Reading from the N-terminus, the 238-residue chain is MESTSNPTVSFLGIDFDLTILAMSLLTITIIFILVFWASRKMTIKPKGKQNVLEYVYELVNNTISQNLGHYTKNYSLLMFILFSFVFVANNLGLMTSLKTHEHNFWTSPTANFGVDITLSLLVAFICHIEGIRKKGIGGYLKGFLSPTPAMLPMNLLEEVTNVASLALRLFGNIFSGEVVTGLLLQLAVLSPFTGPLAFALNIVWTAFSMFIGFIQAYVFIILSSSYIGHKVHGDEEE.

5 helical membrane passes run 18–38 (LTIL…VFWA), 75–95 (YSLL…LGLM), 112–132 (NFGV…IEGI), 179–199 (VVTG…PLAF), and 203–223 (IVWT…FIIL).

This sequence belongs to the ATPase A chain family. As to quaternary structure, F-type ATPases have 2 components, CF(1) - the catalytic core - and CF(0) - the membrane proton channel. CF(1) has five subunits: alpha(3), beta(3), gamma(1), delta(1), epsilon(1). CF(0) has three main subunits: a(1), b(2) and c(9-12). The alpha and beta chains form an alternating ring which encloses part of the gamma chain. CF(1) is attached to CF(0) by a central stalk formed by the gamma and epsilon chains, while a peripheral stalk is formed by the delta and b chains.

The protein resides in the cell membrane. In terms of biological role, key component of the proton channel; it plays a direct role in the translocation of protons across the membrane. This Streptococcus agalactiae serotype III (strain NEM316) protein is ATP synthase subunit a.